We begin with the raw amino-acid sequence, 166 residues long: 6,7-dimethyl-8-ribityllumazine synthase (166 aa).

5-amino-6-(D-ribitylamino)uracil contacts are provided by residues Trp31, 63-65, and 85-87; these read SFE and VII. Residue 90-91 coordinates (2S)-2-hydroxy-3-oxobutyl phosphate; it reads GT. His93 functions as the Proton donor in the catalytic mechanism. Residue Phe118 participates in 5-amino-6-(D-ribitylamino)uracil binding. Arg132 is a binding site for (2S)-2-hydroxy-3-oxobutyl phosphate.

This sequence belongs to the DMRL synthase family.

The enzyme catalyses (2S)-2-hydroxy-3-oxobutyl phosphate + 5-amino-6-(D-ribitylamino)uracil = 6,7-dimethyl-8-(1-D-ribityl)lumazine + phosphate + 2 H2O + H(+). Its pathway is cofactor biosynthesis; riboflavin biosynthesis; riboflavin from 2-hydroxy-3-oxobutyl phosphate and 5-amino-6-(D-ribitylamino)uracil: step 1/2. Catalyzes the formation of 6,7-dimethyl-8-ribityllumazine by condensation of 5-amino-6-(D-ribitylamino)uracil with 3,4-dihydroxy-2-butanone 4-phosphate. This is the penultimate step in the biosynthesis of riboflavin. This Cutibacterium acnes (strain DSM 16379 / KPA171202) (Propionibacterium acnes) protein is 6,7-dimethyl-8-ribityllumazine synthase.